The sequence spans 301 residues: uncharacterized protein (301 aa).

Positions 1–21 (MKIKLILVLIVFLTIVNVNNS) are cleaved as a signal peptide. N-linked (GlcNAc...) asparagine glycans are attached at residues asparagine 19, asparagine 59, asparagine 102, and asparagine 180.

It is found in the secreted. This is an uncharacterized protein from Dictyostelium discoideum (Social amoeba).